The chain runs to 773 residues: E3 ubiquitin-protein ligase RFWD3 (773 aa).

Disordered stretches follow at residues 18 to 67 (VAEQ…SQVG), 92 to 117 (RVEN…IPVS), 139 to 230 (LRPP…EEVV), and 259 to 279 (GETL…SVSK). A Phosphoserine; by ATM and ATR modification is found at Ser47. A compositionally biased stretch (low complexity) spans 50 to 59 (APPLLQPAPA). Ser64 is subject to Phosphoserine; by ATM and ATR. Positions 151–164 (RSRRRRGSASRRSR) are enriched in basic residues. A compositionally biased stretch (polar residues) spans 186-205 (VSRTQPHLPSMSQDSETRNP). Over residues 207-221 (SEDLQVSSSSSSDSE) the composition is skewed to low complexity. Over residues 263 to 273 (PKQSPQKTNPL) the composition is skewed to polar residues. Residues 287–331 (CTICFEHWTNAGDHRLSALRCGHLFGYKCISKWLKGQARKCPQCN) form an RING-type; degenerate zinc finger. Residues 361–403 (SLLKEQMLRKQAELESAQCRLQLQVLTDECSKLHSRVQDLQKL) adopt a coiled-coil conformation. WD repeat units follow at residues 494–536 (MHGK…QTYN), 538–576 (GRPV…SHIQ), and 582–627 (KARC…SHWP).

Interacts with MDM2 and p53/TP53. Binds to the RPA complex via direct interaction with RPA2. Interacts with RAD51. In terms of processing, phosphorylated at Ser-46 and Ser-63 upon DNA damage by ATM or ATR. ATM phosphorylation occurs at early times upon DNA damage, while ATR is the major kinase at later times. Phosphorylation by ATM and ATR is required to stabilize p53/TP53. Part of the phosphorylation depends upon RPA2 presence.

Its subcellular location is the nucleus. The protein localises to the PML body. It localises to the cytoplasm. It carries out the reaction S-ubiquitinyl-[E2 ubiquitin-conjugating enzyme]-L-cysteine + [acceptor protein]-L-lysine = [E2 ubiquitin-conjugating enzyme]-L-cysteine + N(6)-ubiquitinyl-[acceptor protein]-L-lysine.. Its pathway is protein modification; protein ubiquitination. Functionally, E3 ubiquitin-protein ligase required for the repair of DNA interstrand cross-links (ICL) in response to DNA damage. Plays a key role in RPA-mediated DNA damage signaling and repair. Acts by mediating ubiquitination of the RPA complex (RPA1, RPA2 and RPA3 subunits) and RAD51 at stalled replication forks, leading to remove them from DNA damage sites and promote homologous recombination. Also mediates the ubiquitination of p53/TP53 in the late response to DNA damage, and acts as a positive regulator of p53/TP53 stability, thereby regulating the G1/S DNA damage checkpoint. May act by catalyzing the formation of short polyubiquitin chains on p53/TP53 that are not targeted to the proteasome. In response to ionizing radiation, interacts with MDM2 and enhances p53/TP53 ubiquitination, possibly by restricting MDM2 from extending polyubiquitin chains on ubiquitinated p53/TP53. Required to translesion DNA synthesis across DNA-protein cross-link adducts by catalyzing ubiquitination of proteins on single-stranded DNA (ssDNA). This is E3 ubiquitin-protein ligase RFWD3 (RFWD3) from Ailuropoda melanoleuca (Giant panda).